Here is a 317-residue protein sequence, read N- to C-terminus: Ribonuclease 3-like protein 2 (317 aa).

Residues 1 to 26 (MAPPPAMKPASRKRGPPAPDPVELPP) form a disordered region. The segment covering 16 to 26 (PPAPDPVELPP) has biased composition (pro residues). The region spanning 37-185 (AARVERLLRY…IAAAVYVDCK (149 aa)) is the RNase III domain. Residues glutamate 74, aspartate 171, and glutamate 174 each coordinate Mg(2+). The DRBM domain maps to 211 to 274 (QPVTMLHELC…ARDATRKLAG (64 aa)).

The cofactor is Mg(2+). Mn(2+) serves as cofactor.

Cleaves double-stranded RNA (dsRNA). The polypeptide is Ribonuclease 3-like protein 2 (Oryza sativa subsp. japonica (Rice)).